Here is a 444-residue protein sequence, read N- to C-terminus: MANVVVIGAQWGDEGKGKITDLLSRSADVVVRYQGGVNAGHTVVVGEQTLKLHLIPSGILYPDTQCIIGSGTVIDPKVLLGEVEMLEQLGISTDHLLISQTAHVTMPYHRLIDQASEQQRGSHKIGTTGRGIGPTYADKSERTGIRILDLMDPEGLREQLTWTIAQKNVILDKLYGLPPLDAESVIEEYSGYAERLRPHVVDSSLTIDEAWRKRKNILFEGAQGTLLDLDHGTYPYVTSSNPVAGGACIGAGVGPTIIDRVIGVAKAYTTRVGEGPFPTELHGDIGELLCQRGAEFGTTTGRRRRCGWFDAVIGRYAVRINGIDCLAITKLDVLDDLDEIQVCVAYDIDGERCDHFPSSARSFANCQPIYKTVPGWKQSTSHCRNLEDLPKAALDYLKFLAELMEVPIAIVSLGASRDQTIIVEDPIHGPKRALLYTNGDSSAS.

GTP-binding positions include 12 to 18 (GDEGKGK) and 40 to 42 (GHT). Aspartate 13 acts as the Proton acceptor in catalysis. Residues aspartate 13 and glycine 40 each contribute to the Mg(2+) site. Residues 13–16 (DEGK), 38–41 (NAGH), threonine 128, arginine 142, glutamine 223, threonine 238, and arginine 302 each bind IMP. The Proton donor role is filled by histidine 41. Position 298–304 (298–304 (TTTGRRR)) interacts with substrate. GTP contacts are provided by residues arginine 304, 330–332 (KLD), and 412–414 (SLG).

The protein belongs to the adenylosuccinate synthetase family. In terms of assembly, homodimer. Mg(2+) is required as a cofactor.

The protein localises to the cytoplasm. It carries out the reaction IMP + L-aspartate + GTP = N(6)-(1,2-dicarboxyethyl)-AMP + GDP + phosphate + 2 H(+). It functions in the pathway purine metabolism; AMP biosynthesis via de novo pathway; AMP from IMP: step 1/2. Plays an important role in the de novo pathway of purine nucleotide biosynthesis. Catalyzes the first committed step in the biosynthesis of AMP from IMP. The protein is Adenylosuccinate synthetase of Synechococcus elongatus (strain ATCC 33912 / PCC 7942 / FACHB-805) (Anacystis nidulans R2).